The primary structure comprises 1634 residues: MGMSMGKIKIDALIDNTYKTIEDKAVIYLYLINSILKDRDFKPYFYVELHKEKVENEDIEKIKEFLLKNDLLKFVENIEVVKKIILRKEKEVIKIIATHPQKVPKLRKIKECEIVKEIYEHDIPFAKRYLIDNEIIPMTYWDFENKKPVSIEIPKLKSVAFDMEVYNRDTEPNPERDPILMASFWDENGGKVITYKEFNHPNIEVVKNEKELIKKIIETLKEYDVIYTYNGDNFDFPYLKARAKIYGIDINLGKDGEELKIKRGGMEYRSYIPGRVHIDLYPISRRLLKLTKYTLEDVVYNLFGIEKLKIPHTKIVDYWANNDKTLIEYSLQDAKYTYKIGKYFFPLEVMFSRIVNQTPFEITRMSSGQMVEYLLMKRAFKENMIVPNKPDEEEYRRRVLTTYEGGYVKEPEKGMFEDIISMDFRCHPKGTKVVVKGKGIVNIEDVKEGNYVLGIDGWQKVKKVWKYEYEGELINVNGLKCTPNHKIPLRYKIKHKKINKNDYLVRDIYAKSLLTKFKGEGKLILCKDFETIGNYEKYINDMDEDFILKSELIGILLAEGHLLRRDIEYFDSSRGKKRISHQYRVEITVNEDEKDFIEKIKYIFKKLFNYELYVRRKKGTKAITLGCAKKDIYLKIEEILKNKEKYLPNAILRGFFEGDGYVNTVRRAVVVNQGTNNYDKIKFIASLLDRLGIKYSFYTYSYEERGKKLKRYVIEIFSKGDLIKFSILISFISRRKNNLLNEIIRQKTLYKIGDYGFYDLDDVCVSLESYKGEVYDLTLEGRPYYFANGILTHNSLYPSIIISYNISPDTLDCECCKDVSEKILGHWFCKKKEGLIPKTLRNLIERRINIKRRMKKMAEIGEINEEYNLLDYEQKSLKILANSILPDEYLTIIEEDGIKVVKIGEYIDDLMRKHKDKIKFSGISEILETKNLKTFSFDKITKKCEIKKVKALIRHPYFGKAYKIKLRSGRTIKVTRGHSLFKYENGKIVEVKGDDVRFGDLIVVPKKLTCVDKEVVINIPKRLINADEEEIKDLVITKHKDKAFFVKLKKTLEDIENNKLKVIFDDCILYLKELGLIDYNIIKKINKVDIKILDEEKFKAYKKYFDTVIEHGNFKKGRCNIQYIKIKDYIANIPDKEFEDCEIGAYSGKINALLKLDEKLAKFLGFFVTRGRLKKQKLKGETVYEISVYKSLPEYQKEIAETFKEVFGAGSMVKDKVTMDNKIVYLVLKYIFKCGDKDKKHIPEELFLASESVIKSFLDGFLKAKKNSHKGTSTFMAKDEKYLNQLMILFNLVGIPTRFTPVKNKGYKLTLNPKYGTVKDLMLDEVKEIEAFEYSGYVYDLSVEDNENFLVNNIYAHNSVYGYLAFPRARFYSRECAEIVTYLGRKYILETVKEAEKFGFKVLYIDTDGFYAIWKEKISKEELIKKAMEFVEYINSKLPGTMELEFEGYFKRGIFVTKKRYALIDENGRVTVKGLEFVRRDWSNIAKITQRRVLEALLVEGSIEKAKKIIQDVIKDLREKKIKKEDLIIYTQLTKDPKEYKTTAPHVEIAKKLMREGKRIKVGDIIGYIIVKGTKSISERAKLPEEVDIDDIDVNYYIDNQILPPVLRIMEAVGVSKNELKKEGAQLTLDKFFK.

DOD-type homing endonuclease domains are found at residues 552–693 and 1163–1295; these read LIGI…RLGI and FLGF…LVGI.

It belongs to the DNA polymerase type-B family. Post-translationally, this protein undergoes a protein self splicing that involves a post-translational excision of the intervening region (intein) followed by peptide ligation.

The enzyme catalyses DNA(n) + a 2'-deoxyribonucleoside 5'-triphosphate = DNA(n+1) + diphosphate. The chain is DNA polymerase (pol) from Methanocaldococcus jannaschii (strain ATCC 43067 / DSM 2661 / JAL-1 / JCM 10045 / NBRC 100440) (Methanococcus jannaschii).